The primary structure comprises 417 residues: Serine hydroxymethyltransferase (417 aa).

Residues Leu121 and 125-127 each bind (6S)-5,6,7,8-tetrahydrofolate; that span reads GHL. Lys229 bears the N6-(pyridoxal phosphate)lysine mark. (6S)-5,6,7,8-tetrahydrofolate is bound at residue 355 to 357; that stretch reads SPF.

This sequence belongs to the SHMT family. As to quaternary structure, homodimer. Pyridoxal 5'-phosphate serves as cofactor.

The protein localises to the cytoplasm. The enzyme catalyses (6R)-5,10-methylene-5,6,7,8-tetrahydrofolate + glycine + H2O = (6S)-5,6,7,8-tetrahydrofolate + L-serine. It participates in one-carbon metabolism; tetrahydrofolate interconversion. It functions in the pathway amino-acid biosynthesis; glycine biosynthesis; glycine from L-serine: step 1/1. Its function is as follows. Catalyzes the reversible interconversion of serine and glycine with tetrahydrofolate (THF) serving as the one-carbon carrier. This reaction serves as the major source of one-carbon groups required for the biosynthesis of purines, thymidylate, methionine, and other important biomolecules. Also exhibits THF-independent aldolase activity toward beta-hydroxyamino acids, producing glycine and aldehydes, via a retro-aldol mechanism. In Buchnera aphidicola subsp. Baizongia pistaciae (strain Bp), this protein is Serine hydroxymethyltransferase.